The following is a 406-amino-acid chain: Leu/Ile/Val-binding protein homolog 5 (406 aa).

Residues 1–29 (MIGTRLPAWTRVLACGVAGLSLMTISAKA) form the signal peptide.

This sequence belongs to the leucine-binding protein family.

In terms of biological role, component of an amino-acid transport system. This chain is Leu/Ile/Val-binding protein homolog 5, found in Brucella abortus (strain 2308).